A 114-amino-acid polypeptide reads, in one-letter code: MGFPIPDPYVWDPSFRTFYTAIDDEHKTLFDGIFHLARDDNKDNLGELRRCTGKHFLNEQVMMQASQYAGYDEHKKAHDEFIHQLDHWKGDSNWAKTWLVNHIKTIDFKYKGKI.

Positions 26, 55, 59, 74, 78, 102, and 107 each coordinate Fe cation.

This sequence belongs to the hemerythrin family.

Hemerythrin is a respiratory protein in blood cells of certain marine worms. The oxygen-binding site in each chain contains two iron atoms. The protein is Hemerythrin subunit 1 of Golfingia vulgaris (Marine worm).